A 546-amino-acid polypeptide reads, in one-letter code: Chromosomal replication initiator protein DnaA (546 aa).

The tract at residues 1 to 85 is domain I, interacts with DnaA modulators; that stretch reads MSDPQAALRA…TRALSQHMGR (85 aa). Residues 85–204 are domain II; sequence RPCSLAVTIA…EPAHNPNREK (120 aa). Over residues 96 to 111 the composition is skewed to pro residues; that stretch reads PPQPAPQEEPPAPAPQ. The interval 96 to 209 is disordered; it reads PPQPAPQEEP…PNREKSLNPK (114 aa). Residues 126-145 show a composition bias toward low complexity; sequence QTQAFQQPTQSTQPAPASQP. Basic and acidic residues predominate over residues 191–209; sequence IPREEPAHNPNREKSLNPK. The tract at residues 205–421 is domain III, AAA+ region; that stretch reads SLNPKHTFEN…GALIRVSAYS (217 aa). ATP contacts are provided by glycine 249, glycine 251, lysine 252, and threonine 253. The segment at 422–546 is domain IV, binds dsDNA; the sequence is SLVNEPISLE…TQRVKNHNQR (125 aa).

It belongs to the DnaA family. Oligomerizes as a right-handed, spiral filament on DNA at oriC.

The protein localises to the cytoplasm. Functionally, plays an essential role in the initiation and regulation of chromosomal replication. ATP-DnaA binds to the origin of replication (oriC) to initiate formation of the DNA replication initiation complex once per cell cycle. Binds the DnaA box (a 9 base pair repeat at the origin) and separates the double-stranded (ds)DNA. Forms a right-handed helical filament on oriC DNA; dsDNA binds to the exterior of the filament while single-stranded (ss)DNA is stabiized in the filament's interior. The ATP-DnaA-oriC complex binds and stabilizes one strand of the AT-rich DNA unwinding element (DUE), permitting loading of DNA polymerase. After initiation quickly degrades to an ADP-DnaA complex that is not apt for DNA replication. Binds acidic phospholipids. This Corynebacterium aurimucosum (strain ATCC 700975 / DSM 44827 / CIP 107346 / CN-1) (Corynebacterium nigricans) protein is Chromosomal replication initiator protein DnaA.